A 144-amino-acid polypeptide reads, in one-letter code: Transcription antitermination protein NusB (144 aa).

This sequence belongs to the NusB family.

Its function is as follows. Involved in transcription antitermination. Required for transcription of ribosomal RNA (rRNA) genes. Binds specifically to the boxA antiterminator sequence of the ribosomal RNA (rrn) operons. The polypeptide is Transcription antitermination protein NusB (Haemophilus influenzae (strain PittGG)).